Here is a 515-residue protein sequence, read N- to C-terminus: Tripartite motif-containing protein 5 (515 aa).

Residue Ala2 is modified to N-acetylalanine. An RING-type zinc finger spans residues Cys15–Arg60. At Ser87 the chain carries Phosphoserine. The B box-type zinc finger occupies Gln92–Met133. Residues Cys97, His100, Cys119, and His125 each contribute to the Zn(2+) site. The stretch at Ala137–Gln225 forms a coiled coil. Residues Phe187–Asn200 form a required for interaction with GABARAP and for autophagy region. Positions Leu283–Ser515 constitute a B30.2/SPRY domain.

It belongs to the TRIM/RBCC family. In terms of assembly, can form homodimers and homotrimers. In addition to lower-order dimerization, also exhibits a higher-order multimerization and both low- and high-order multimerizations are essential for its restriction activity. Interacts with BTBD1 and BTBD2. Interacts with PSMC4, PSMC5, PSMD7 and HSPA8/HSC70. Interacts (via B30.2/SPRY domain) with HSPA1A/B. Interacts with PSMC2, MAP3K7/TAK1, TAB2 and TAB3. Interacts with SQSTM1. Interacts with TRIM6 and TRIM34. Interacts with ULK1 (phosphorylated form), GABARAP, GABARAPL1, GABARAPL2, MAP1LC3A, MAP1LC3C and BECN1. In terms of processing, degraded in a proteasome-independent fashion in the absence of viral infection but in a proteasome-dependent fashion following exposure to restriction sensitive virus. Autoubiquitinated in a RING finger- and UBE2D2-dependent manner. Monoubiquitinated by TRIM21. Deubiquitinated by Yersinia YopJ. Ubiquitination may not lead to proteasomal degradation.

The protein resides in the cytoplasm. Its subcellular location is the nucleus. It carries out the reaction S-ubiquitinyl-[E2 ubiquitin-conjugating enzyme]-L-cysteine + [acceptor protein]-L-lysine = [E2 ubiquitin-conjugating enzyme]-L-cysteine + N(6)-ubiquitinyl-[acceptor protein]-L-lysine.. It functions in the pathway protein modification; protein ubiquitination. Capsid-specific restriction factor that prevents infection from non-host-adapted retroviruses. Blocks viral replication early in the life cycle, after viral entry but before reverse transcription. In addition to acting as a capsid-specific restriction factor, also acts as a pattern recognition receptor that activates innate immune signaling in response to the retroviral capsid lattice. Binding to the viral capsid triggers its E3 ubiquitin ligase activity, and in concert with the heterodimeric ubiquitin conjugating enzyme complex UBE2V1-UBE2N (also known as UBC13-UEV1A complex) generates 'Lys-63'-linked polyubiquitin chains, which in turn are catalysts in the autophosphorylation of the MAP3K7/TAK1 complex (includes TAK1, TAB2, and TAB3). Activation of the MAP3K7/TAK1 complex by autophosphorylation results in the induction and expression of NF-kappa-B and MAPK-responsive inflammatory genes, thereby leading to an innate immune response in the infected cell. Restricts infection by human immunodeficiency virus type 1 (HIV-1) and N-tropic murine leukemia virus (N-MLV). Plays a role in regulating autophagy through activation of autophagy regulator BECN1 by causing its dissociation from its inhibitors BCL2 and TAB2. This is Tripartite motif-containing protein 5 (TRIM5) from Chlorocebus pygerythrus (Vervet monkey).